The sequence spans 714 residues: Calpain-1 catalytic subunit (714 aa).

The region spanning 55 to 354 (LFRDEAFPPV…FTRLEICNLT (300 aa)) is the Calpain catalytic domain. Q109 and D114 together coordinate Ca(2+). Catalysis depends on residues C115, H272, and N296. Residues D318 and D323 each coordinate Ca(2+). Phosphothreonine is present on T354. A domain III region spans residues 355-526 (PDALKSQRVR…KKAGTQELDD (172 aa)). Positions 527 to 542 (QVQAILPDEQVLSEEE) are linker. Residues 543-713 (IDENFKALFR…LFKWLQLTMF (171 aa)) form a domain IV region. EF-hand domains are found at residues 585-618 (FSLE…NRIR), 615-650 (NRIR…AGFK), and 680-714 (VRLE…TMFA). D598, D600, N602, K604, E609, D628, D630, S632, S634, and E639 together coordinate Ca(2+).

This sequence belongs to the peptidase C2 family. Forms a heterodimer with a small (regulatory) subunit CAPNS1. It depends on Ca(2+) as a cofactor. Undergoes calcium-induced successive autoproteolytic cleavages that generate a membrane-bound 78 kDa active form and an intracellular 75 kDa active form. Calpastatin reduces with high efficiency the transition from 78 kDa to 75 kDa calpain forms.

Its subcellular location is the cytoplasm. The protein localises to the cell membrane. It carries out the reaction Broad endopeptidase specificity.. Activated by micromolar concentrations of calcium and inhibited by calpastatin. In terms of biological role, calcium-regulated non-lysosomal thiol-protease which catalyzes limited proteolysis of substrates involved in cytoskeletal remodeling and signal transduction. Proteolytically cleaves CTBP1. Cleaves and activates caspase-7 (CASP7). The polypeptide is Calpain-1 catalytic subunit (Sus scrofa (Pig)).